Here is a 410-residue protein sequence, read N- to C-terminus: Cathepsin D (410 aa).

The N-terminal stretch at 1–18 (MQPPSLLLLVLGLLAAPA) is a signal peptide. Positions 19–64 (AALVRIPLHKFTSVRRTMTELGGPVEDLIAKGPISKYAQGAPAVTG) are cleaved as a propeptide — activation peptide. The Peptidase A1 domain occupies 79-405 (YYGEIGIGTP…DRDQNRVGLA (327 aa)). Cystine bridges form between cysteine 91/cysteine 160 and cysteine 110/cysteine 117. Aspartate 97 is an active-site residue. N-linked (GlcNAc...) asparagine glycosylation is found at asparagine 134 and asparagine 261. Cysteine 284 and cysteine 288 are joined by a disulfide. Residue aspartate 293 is part of the active site. A disulfide bond links cysteine 327 and cysteine 364.

The protein belongs to the peptidase A1 family. As to quaternary structure, consists of a light chain and a heavy chain. Interacts with ADAM30; this leads to activation of CTSD. Interacts with GRN; stabilizes CTSD; increases its proteolytic activity. N- and O-glycosylated. Post-translationally, undergoes proteolytic cleavage and activation by ADAM30.

Its subcellular location is the lysosome. It localises to the melanosome. The protein localises to the secreted. The protein resides in the extracellular space. It carries out the reaction Specificity similar to, but narrower than, that of pepsin A. Does not cleave the 4-Gln-|-His-5 bond in B chain of insulin.. Its function is as follows. Acid protease active in intracellular protein breakdown. Plays a role in APP processing following cleavage and activation by ADAM30 which leads to APP degradation. This Canis lupus familiaris (Dog) protein is Cathepsin D (CTSD).